A 505-amino-acid chain; its full sequence is ATP synthase subunit alpha, chloroplastic (505 aa).

Residue 170–177 participates in ATP binding; that stretch reads GDRQTGKT.

The protein belongs to the ATPase alpha/beta chains family. As to quaternary structure, F-type ATPases have 2 components, CF(1) - the catalytic core - and CF(0) - the membrane proton channel. CF(1) has five subunits: alpha(3), beta(3), gamma(1), delta(1), epsilon(1). CF(0) has four main subunits: a, b, b' and c.

Its subcellular location is the plastid. The protein resides in the chloroplast thylakoid membrane. It carries out the reaction ATP + H2O + 4 H(+)(in) = ADP + phosphate + 5 H(+)(out). Its function is as follows. Produces ATP from ADP in the presence of a proton gradient across the membrane. The alpha chain is a regulatory subunit. This chain is ATP synthase subunit alpha, chloroplastic, found in Mesostigma viride (Green alga).